The sequence spans 147 residues: Large ribosomal subunit protein uL13 (147 aa).

This sequence belongs to the universal ribosomal protein uL13 family. As to quaternary structure, part of the 50S ribosomal subunit.

Functionally, this protein is one of the early assembly proteins of the 50S ribosomal subunit, although it is not seen to bind rRNA by itself. It is important during the early stages of 50S assembly. The protein is Large ribosomal subunit protein uL13 of Lactiplantibacillus plantarum (strain ATCC BAA-793 / NCIMB 8826 / WCFS1) (Lactobacillus plantarum).